The sequence spans 255 residues: 5-oxoprolinase subunit A 2 (255 aa).

Belongs to the LamB/PxpA family. As to quaternary structure, forms a complex composed of PxpA, PxpB and PxpC.

It carries out the reaction 5-oxo-L-proline + ATP + 2 H2O = L-glutamate + ADP + phosphate + H(+). Its function is as follows. Catalyzes the cleavage of 5-oxoproline to form L-glutamate coupled to the hydrolysis of ATP to ADP and inorganic phosphate. The protein is 5-oxoprolinase subunit A 2 of Agrobacterium fabrum (strain C58 / ATCC 33970) (Agrobacterium tumefaciens (strain C58)).